A 488-amino-acid chain; its full sequence is Pup--protein ligase (488 aa).

Position 34 (Glu-34) interacts with Mg(2+). Arg-77 is an ATP binding site. Tyr-79 contributes to the Mg(2+) binding site. Residue Asp-81 is the Proton acceptor of the active site. Residue Glu-87 coordinates Mg(2+). ATP contacts are provided by Thr-90 and Trp-453.

Belongs to the Pup ligase/Pup deamidase family. Pup-conjugating enzyme subfamily.

It carries out the reaction ATP + [prokaryotic ubiquitin-like protein]-L-glutamate + [protein]-L-lysine = ADP + phosphate + N(6)-([prokaryotic ubiquitin-like protein]-gamma-L-glutamyl)-[protein]-L-lysine.. The protein operates within protein degradation; proteasomal Pup-dependent pathway. It participates in protein modification; protein pupylation. Catalyzes the covalent attachment of the prokaryotic ubiquitin-like protein modifier Pup to the proteasomal substrate proteins, thereby targeting them for proteasomal degradation. This tagging system is termed pupylation. The ligation reaction involves the side-chain carboxylate of the C-terminal glutamate of Pup and the side-chain amino group of a substrate lysine. The polypeptide is Pup--protein ligase (Bifidobacterium dentium (strain ATCC 27534 / DSM 20436 / JCM 1195 / Bd1)).